Here is a 94-residue protein sequence, read N- to C-terminus: MVLLAGTRPQGGEARCMIPPPPSPLLGAQVEEDRTEFKEFQDFSSLPDTRSVASDDSLYPFQDEEEHGVEGVESVPEEGILEAWGSCGRWCGVG.

The interval methionine 1–serine 23 is disordered.

This is an uncharacterized protein from Homo sapiens (Human).